We begin with the raw amino-acid sequence, 429 residues long: C4-dicarboxylate transport protein (429 aa).

8 helical membrane passes run 3-23 (LTIF…GVLL), 44-64 (LIKM…IAGM), 76-96 (IALL…LLIV), 142-162 (IGAF…LFGF), 184-204 (VIFG…FGAM), 222-242 (LIAC…GSIA), 326-346 (VIHQ…AAGV), and 352-372 (IVLA…LALI).

The protein belongs to the dicarboxylate/amino acid:cation symporter (DAACS) (TC 2.A.23) family.

It localises to the cell inner membrane. Responsible for the transport of dicarboxylates such as succinate, fumarate, and malate from the periplasm across the membrane. The protein is C4-dicarboxylate transport protein of Serratia proteamaculans (strain 568).